The primary structure comprises 357 residues: MFSCKQHLSLGACVFCLGLLASTPFIWCFVFANLLSLEIFSPWQTHVYRLGFPTACLMAVLWTLVPAKHAVRAVTPAIMLNIASALIFFSLRVYSTSTWVSAPCLFLANLPLLCLWPRLAIEIVYICPAIHQRFFELGLLLACTIFALSVVSRALEVSAVFMSPFFIFLALGSGSLAGARRNQIYTSGLERRRSIFCARGDHSVASLKETLHKCPWDLLAISALTVLVVCVMIVLHVHAEVFFGLSRYLPLFLCGAMASGGLYLGHSSIIACVMATLCTLSSVVVYFLHETLGPLGKTVLFISIFVYYFSGVAALSAAMRYKLKKFVNGPLVHLRVVYMCCFVFTFCEYLLVTFIKS.

Residues 1-11 (MFSCKQHLSLG) lie on the Virion surface side of the membrane. The segment at 12 to 32 (ACVFCLGLLASTPFIWCFVFA) is a transmembrane helix. Over 33–46 (NLLSLEIFSPWQTH) the chain is Intravirion. Residues 47-67 (VYRLGFPTACLMAVLWTLVPA) are membrane-embedded. Residues 68-70 (KHA) lie on the Virion surface side of the membrane. Positions 71–91 (VRAVTPAIMLNIASALIFFSL) form a transmembrane segment. Residues 92 to 98 (RVYSTST) lie on the Intravirion side of the membrane. Over 99-121 (WVSAPCLFLANLPLLCLWPRLAI) the chain traverses the membrane. Residues 122 to 133 (EIVYICPAIHQR) are Virion surface-facing. Positions 134–154 (FFELGLLLACTIFALSVVSRA) form a transmembrane segment. Residues 155 to 158 (LEVS) lie on the Intravirion side of the membrane. Residues 159–179 (AVFMSPFFIFLALGSGSLAGA) are membrane-embedded. Over 180–217 (RRNQIYTSGLERRRSIFCARGDHSVASLKETLHKCPWD) the chain is Virion surface. The short motif at 199–201 (RGD) is the Integrin binding site element. Residues 218-238 (LLAISALTVLVVCVMIVLHVH) are membrane-embedded. Over 239-240 (AE) the chain is Intravirion. The chain crosses the lipid bilayer at residues 241-261 (VFFGLSRYLPLFLCGAMASGG). Residues 262–267 (LYLGHS) lie on the Virion surface side of the membrane. Over 268-288 (SIIACVMATLCTLSSVVVYFL) the chain traverses the membrane. Topologically, residues 289 to 298 (HETLGPLGKT) are intravirion. A transmembrane span lies at residues 299 to 319 (VLFISIFVYYFSGVAALSAAM). Over 320 to 335 (RYKLKKFVNGPLVHLR) the chain is Virion surface. A transmembrane helix spans residues 336-356 (VVYMCCFVFTFCEYLLVTFIK). Residue Ser-357 is a topological domain, intravirion.

Belongs to the herpesviridae BMRF2 family. As to quaternary structure, interacts with BDLF2. Interacts with host beta1 integrin family. Post-translationally, extensively glycosylated by O-linked oligosaccharides.

It is found in the virion membrane. The protein localises to the host cell membrane. Facilitates virus attachment to oral epithelial cells by binding to host beta1 integrin family. Participates in rearrangement of cellular actin to increase intercellular contacts by binding BDLF2 and thereby promote virus cell-to-cell spreading. In Homo sapiens (Human), this protein is Protein BMRF2.